The sequence spans 148 residues: Large ribosomal subunit protein bL9 (148 aa).

The protein belongs to the bacterial ribosomal protein bL9 family.

Binds to the 23S rRNA. The polypeptide is Large ribosomal subunit protein bL9 (Hydrogenobaculum sp. (strain Y04AAS1)).